The primary structure comprises 196 residues: Calcium channel flower (196 aa).

The next 3 membrane-spanning stretches (helical) occupy residues 35–55 (LGIV…LSII), 70–92 (LAGF…QVGS), and 113–133 (AVPP…GLIF).

It belongs to the calcium channel flower family. In terms of assembly, homomultimer. Associates with the dally/ magu complex.

It localises to the cell membrane. The protein resides in the cytoplasmic vesicle. Its subcellular location is the secretory vesicle. The protein localises to the synaptic vesicle membrane. It is found in the presynaptic cell membrane. It localises to the endosome. Channel activity is inhibited by La(3+), which reduces Ca(2+) influx and thus inhibits it's function in promoting activity-dependent bulk endocytosis (ADBE) in response to high stimuli. Functionally, transmembrane protein which mediates synaptic endocytosis, fitness-based cell culling, neuronal culling, morphogen gradient scaling, and calcium transport. Regulates synaptic endocytosis and hence couples exo- with endocytosis. Controls two major modes of synaptic vesicle (SV) endocytosis in the synaptic boutons of neuromuscular junctions (NMJs); Ca(2+) channel-independent Clathrin-mediated endocytosis (CME) in response to mild stimulation, and Ca(2+) channel-dependent activity-dependent bulk endocytosis (ADBE) in response to strong stimulation. Functions in ADBE and subsequent SV reformation from bulk endosomes by initiating Ca(2+) channel-dependent phosphatidylinositol 4,5-bisphosphate (PtdIns(4,5)P2) compartmentalization in synaptic boutons. There it acts at the periactive zone to provide the low Ca(2+) levels required to initiate Calcineurin activation and upregulate PtdIns(4,5)P2. Conversely PtdIns(4,5)P2 enhances fwe Ca(2+) channel-activity, establishing a positive feedback loop that induces PtdIns(4,5)P2 microdomain at the periactive zone. These microdomains trigger bulk membrane invagination (i.e. ADBE) by triggering actin polymerization while also promoting localization of fwe to bulk endosomes, thereby removing the ADBE trigger to reduce endocytosis and prevent excess membrane uptake. PtdIns(4,5)P2 then promotes SV reformation from the bulk endosomes, to coordinate ADBE and subsequent SV reformation. Different combinations of the flower isoforms at the cell membrane are also required for the identification and elimination of suboptimal or supernumerary cells during development, regeneration, and adulthood. Required for the recognition and elimination of unfit cells in the developing wing during cell competition. In the developing pupal retina, mediates the elimination of unwanted postmitotic neurons, including supernumerary photoreceptor neurons that form at the periphery of the retina and are contained within incomplete ommatidia units. Also required for efficient elimination and replacement of old neurons by newly generated neurons during regeneration in the adult brain following mechanical injury. Downstream of the flower fitness fingerprints, cells identified as unwanted or unfit are eliminated via apoptosis through the expression of ahuizotl (azot). However, the cells marked for elimination by the flower isoforms only undergo apoptosis if additional thresholds are met; (1) their neighboring fit/healthy cells express different levels of the fwe isoforms, and (2) the levels of the protective signal SPARC expressed by the loser or unwanted cells are unable to inhibit caspase activation. These additional thresholds for flower-mediated apoptosis, allows useful cells to recover from transient and limited stress before they are unnecessarily eliminated. Functions with dally and magu in a mechanism of scaling, which utilises apoptosis to ensure that the dpp morphogen gradient, which mediates organ growth, remains proportional to the size of the growing wing. In this mechanism, fwe represses dally- and Magu-dependent activity in expanding the gradient, and dally/Magu inhibits fwe-dependent apoptosis to keep cell death rate low. When the levels of these different proteins are optimally regulated the gradient correctly scales with organ growth but when this fails, fwe-mediated apoptosis is activated to trim the developing tissue to match the correct size of the gradient. In Drosophila grimshawi (Hawaiian fruit fly), this protein is Calcium channel flower.